The sequence spans 183 residues: Mid1-interacting protein 1 (183 aa).

Met-1 is modified (N-acetylmethionine). Ser-75 and Ser-79 each carry phosphoserine.

This sequence belongs to the SPOT14 family. Homodimer in the absence of THRSP. Heterodimer with THRSP. The homodimer interacts with ACACA and ACACB. Promotes polymerization of Acetyl-CoA carboxylase to form complexes that contain MID1IP1 and ACACA and/or ACACB. Interaction with THRSP interferes with ACACA binding.

The protein localises to the nucleus. It is found in the cytoplasm. The protein resides in the cytoskeleton. Functionally, plays a role in the regulation of lipogenesis in liver. Up-regulates ACACA enzyme activity. Required for efficient lipid biosynthesis, including triacylglycerol, diacylglycerol and phospholipid. Involved in stabilization of microtubules. The polypeptide is Mid1-interacting protein 1 (MID1IP1) (Homo sapiens (Human)).